The chain runs to 196 residues: Charged multivesicular body protein 1a (196 aa).

Methionine 1 is subject to N-acetylmethionine. Residues 5 to 42 (LFQLKFTAKQLEKLAKKAEKDSKAEQAKVKKALQQKNV) adopt a coiled-coil conformation. Serine 101 is subject to Phosphoserine. Residues 102–124 (AMDLQKVSAVMDRFEQQVQNLDV) are a coiled coil. Serine 173 carries the phosphoserine modification. Residues 185–195 (DQLSRRLAALR) carry the MIT-interacting motif motif.

This sequence belongs to the SNF7 family. As to quaternary structure, probable peripherally associated component of the endosomal sorting required for transport complex III (ESCRT-III). ESCRT-III components are thought to multimerize to form a flat lattice on the perimeter membrane of the endosome. Several assembly forms of ESCRT-III may exist that interact and act sequentially. Self-associates. Interacts with CHMP1B. Interacts with VPS4A. Interacts with VPS4B. Interacts with PHF1. Interacts with IST1. Interacts with MITD1. As to expression, highly expressed in adult heart, kidney and liver. Expressed at lower levels in adult colon, spleen, lung, brain, testis and muscle. Also expressed in myoblasts and embryo fibroblasts.

The protein localises to the cytoplasm. It is found in the endosome membrane. The protein resides in the nucleus matrix. Its function is as follows. Probable peripherally associated component of the endosomal sorting required for transport complex III (ESCRT-III) which is involved in multivesicular bodies (MVBs) formation and sorting of endosomal cargo proteins into MVBs. MVBs contain intraluminal vesicles (ILVs) that are generated by invagination and scission from the limiting membrane of the endosome and mostly are delivered to lysosomes enabling degradation of membrane proteins, such as stimulated growth factor receptors, lysosomal enzymes and lipids. The MVB pathway appears to require the sequential function of ESCRT-O, -I,-II and -III complexes. ESCRT-III proteins mostly dissociate from the invaginating membrane before the ILV is released. The ESCRT machinery also functions in topologically equivalent membrane fission events, such as the terminal stages of cytokinesis. ESCRT-III proteins are believed to mediate the necessary vesicle extrusion and/or membrane fission activities, possibly in conjunction with the AAA ATPase VPS4. Involved in cytokinesis. Involved in recruiting VPS4A and/or VPS4B to the midbody of dividing cells. May also be involved in chromosome condensation. Targets the Polycomb group (PcG) protein BMI1/PCGF4 to regions of condensed chromatin. May play a role in stable cell cycle progression and in PcG gene silencing. The protein is Charged multivesicular body protein 1a (Chmp1a) of Mus musculus (Mouse).